Reading from the N-terminus, the 910-residue chain is METHPSLAVKWSCPDLTIYAGEVTIGEEDRNKMDSKKRKLEKTRITEAACALLNSGGGLIAMQMTNKSEHPVEMGQDLEKSLRELIMSPNMQAFFETKQQEDQFYIFVKSWSCRPEDGSTKPRICSLGSSLYCRSITSKVAMDSREAFEFLKDKKACIKYRPTDDGAPPAKIPRAMCQNSLESNPAFEIFQSKKLEYGQCLLFSESTSIEFKQFSTKHVQAYMKNIIPEYISAFANTQGGYLFIGVDDKRIILGCPKDNVDRDSLKTVANETISKVPVFHFCSSKDKDKVSYETRVIDVFQEGNLYGYLCVIKVEPFCCAVFSEAPISWMVDKEKGVYRLNTEEWVRMMVDFGPEASSKDLSKDFECQLSLCNSPPHCRPVYSKKGLQHKVDLQQRLFQVSPDCLKYTPESLWKELCSQHKRLKGLVKQQIRSFSCGLLILYRSWAVDLNLKEKQEVICDALLIAQNSPPILYTILGEQDEQGQDYCNHTAFTLKQKLVNTGGYTGRVCVMTKVLCLSSQNNIETNGGSVSPINYPSSYNLANIQEMQDLLQALVIVLLNFRSFLSDQLGCEILNLLTAQQYEILSKSLRKTRELFVHGLPGSGKTIIAMKIMEKIRNTFHCETDSILYICENQPLRDFIRAKRICQAVTRKTFMNYRFKTNSFQHIIVDEAQNFRTEDGNWYGKAKAISRRVKSCPGMFWIFLDYFQTSHLKESGLPDFSRQYPREELTQVVRNGDKIAEFLQKELQKIRDNPPCSIPRQSLNIVHEFKWSQSVSGNIKTEQFTLEDMVIYVADKCYDFLRKGYSLQDIAVLFSTDKEKKTYESMFLGEMRKRRRASEMNHAYLCDSNMFDSIRRFSGLERSIVFGINPIATEQPISHNLLLCLASRAMKHLYILYFSTPEGHSSTEAC.

Residues 1–354 are n'-domain region; it reads METHPSLAVK…WVRMMVDFGP (354 aa). Catalysis depends on residues Glu-205 and Glu-210. Residues His-280, Cys-282, and Cys-319 each coordinate Zn(2+). Residue 599–606 participates in ATP binding; sequence GLPGSGKT.

The protein belongs to the Schlafen family. Subgroup III subfamily. Mg(2+) serves as cofactor. In T-cells, expressed at relatively constant levels during development: expressed in immature CD3(-)CD4(-)CD8(-) T-cells (DN stage), in CD4(+)CD8(+) double-positive stage (DP) and mature CD4(+) or CD8(+) thymocytes. Expression is slightly reduced at the DP stage.

The protein resides in the cytoplasm. Its function is as follows. Endoribonuclease that cleaves tRNAs and rRNAs. Cleaves tRNAs 11 nucleotides from the 3'-terminus at the acceptor stem. May be involved in immune system via regulation of inflammation. This Mus musculus (Mouse) protein is Schlafen family member 8.